The sequence spans 159 residues: Transcription elongation factor GreA (159 aa).

A coiled-coil region spans residues 45 to 67 (NAEYHEARKEQSFVEGKIRELQL).

It belongs to the GreA/GreB family.

Its function is as follows. Necessary for efficient RNA polymerase transcription elongation past template-encoded arresting sites. The arresting sites in DNA have the property of trapping a certain fraction of elongating RNA polymerases that pass through, resulting in locked ternary complexes. Cleavage of the nascent transcript by cleavage factors such as GreA or GreB allows the resumption of elongation from the new 3'terminus. GreA releases sequences of 2 to 3 nucleotides. The protein is Transcription elongation factor GreA of Neorickettsia sennetsu (strain ATCC VR-367 / Miyayama) (Ehrlichia sennetsu).